The chain runs to 74 residues: MSGGTTGERPFSDIVTSIRYWVIHTVTIPSLFVAGWLFVSTGLAYDVFGTPRPDEYFTEERQEVPIINQRFSTN.

The chain crosses the membrane as a helical span at residues 22 to 36 (VIHTVTIPSLFVAGW). His24 provides a ligand contact to heme.

It belongs to the PsbE/PsbF family. In terms of assembly, heterodimer of an alpha subunit and a beta subunit. PSII is composed of 1 copy each of membrane proteins PsbA, PsbB, PsbC, PsbD, PsbE, PsbF, PsbH, PsbI, PsbJ, PsbK, PsbL, PsbM, PsbT, PsbX, PsbY, PsbZ, Psb30/Ycf12, at least 3 peripheral proteins of the oxygen-evolving complex and a large number of cofactors. It forms dimeric complexes. It depends on heme b as a cofactor.

Its subcellular location is the plastid. The protein resides in the cyanelle thylakoid membrane. Functionally, this b-type cytochrome is tightly associated with the reaction center of photosystem II (PSII). PSII is a light-driven water:plastoquinone oxidoreductase that uses light energy to abstract electrons from H(2)O, generating O(2) and a proton gradient subsequently used for ATP formation. It consists of a core antenna complex that captures photons, and an electron transfer chain that converts photonic excitation into a charge separation. The sequence is that of Cytochrome b559 subunit alpha from Cyanophora paradoxa.